The chain runs to 89 residues: Small ribosomal subunit protein bS20 (89 aa).

Residues 68-89 (PNKGARKSSRLDHFVNEQKSKQ) are disordered. The span at 76–89 (SRLDHFVNEQKSKQ) shows a compositional bias: basic and acidic residues.

This sequence belongs to the bacterial ribosomal protein bS20 family.

Binds directly to 16S ribosomal RNA. This is Small ribosomal subunit protein bS20 from Mycoplasmopsis agalactiae (strain NCTC 10123 / CIP 59.7 / PG2) (Mycoplasma agalactiae).